Consider the following 647-residue polypeptide: MIKITFPDGAVREFESGVTTFEIAQSISNSLAKKALAGKFNGKLIDTTRAITEDGSIEIVTPDHEDALPILRHSAAHLFAQAARRLFPDIHLGVGPAIEDGFYYDTDNTAGQISNEDLPRIEEEMKKIVKENFPSIREEVTKDEAREIFKNDPYKLELIEEHSEDEGGLTIYRQGEYVDLCRGPHVPSTGRIQIFHLLHVAGAYWRGNSDNAMMQRIYGTAWFDKKDLKNYLQMREEAKERDHRKLGKELDLFMISQEVGQGLPFWLPNGATIRRELERYIVDKEIAAGYQHVYTPPLASVELYKTSGHWDHYREDMFPTMDMGDGEEFVLRPMNCPHHIQVFKHHVHSYRELPIRIAEIGMMHRYEKSGALTGLQRVREMSLNDGHLFVTPEQIQEEFQRALQLIIDVYEDFNLTEYRFRLSLRDPQDTHKYFDNDEMWENAQTMLRAALDEMGVDYFEAEGEAAFYGPKLDIQVKTALGKEETLSTIQLDFLLPERFDLKYIGADGEEHRPVMIHRGVISTMERFTAILIENYKGAFPTWLAPHQVTLIPVSNEKHVDYAWEVAKKLRDRGVRADVDERNEKMQFKIRASQTSKIPYQLIVGDKEMEDGTVNVRRYGQKETHTVAVDEFVEAILADIANKSRVEK.

The 61-residue stretch at 1-61 (MIKITFPDGA…TEDGSIEIVT (61 aa)) folds into the TGS domain. The tract at residues 242–540 (DHRKLGKELD…LIENYKGAFP (299 aa)) is catalytic. Zn(2+)-binding residues include Cys336, His387, and His517.

The protein belongs to the class-II aminoacyl-tRNA synthetase family. As to quaternary structure, homodimer. Zn(2+) is required as a cofactor.

It localises to the cytoplasm. It carries out the reaction tRNA(Thr) + L-threonine + ATP = L-threonyl-tRNA(Thr) + AMP + diphosphate + H(+). Its function is as follows. Catalyzes the attachment of threonine to tRNA(Thr) in a two-step reaction: L-threonine is first activated by ATP to form Thr-AMP and then transferred to the acceptor end of tRNA(Thr). Also edits incorrectly charged L-seryl-tRNA(Thr). The chain is Threonine--tRNA ligase from Streptococcus gordonii (strain Challis / ATCC 35105 / BCRC 15272 / CH1 / DL1 / V288).